The primary structure comprises 45 residues: Large ribosomal subunit protein bL34 (45 aa).

Positions 1–45 (MTKRTFGGTSRKRKRVSGFRVRMRTHTGRSVIRSRRKKGRSRIAV) are disordered. Positions 10 to 45 (SRKRKRVSGFRVRMRTHTGRSVIRSRRKKGRSRIAV) are enriched in basic residues.

Belongs to the bacterial ribosomal protein bL34 family.

The polypeptide is Large ribosomal subunit protein bL34 (Prochlorococcus marinus (strain SARG / CCMP1375 / SS120)).